The sequence spans 226 residues: Cytidylate kinase (226 aa).

10–18 (GPASSGKST) contacts ATP.

It belongs to the cytidylate kinase family. Type 1 subfamily.

It is found in the cytoplasm. It catalyses the reaction CMP + ATP = CDP + ADP. It carries out the reaction dCMP + ATP = dCDP + ADP. The chain is Cytidylate kinase from Streptococcus pyogenes serotype M18 (strain MGAS8232).